A 209-amino-acid chain; its full sequence is Ribonuclease HII (209 aa).

Residues 19 to 209 form the RNase H type-2 domain; the sequence is CIIVGVDEVG…LPGITKLYSK (191 aa). A divalent metal cation contacts are provided by Asp25, Glu26, and Asp118.

Belongs to the RNase HII family. Requires Mn(2+) as cofactor. The cofactor is Mg(2+).

Its subcellular location is the cytoplasm. The enzyme catalyses Endonucleolytic cleavage to 5'-phosphomonoester.. Its function is as follows. Endonuclease that specifically degrades the RNA of RNA-DNA hybrids. In Ehrlichia canis (strain Jake), this protein is Ribonuclease HII.